The primary structure comprises 382 residues: Lipid-A-disaccharide synthase (382 aa).

The protein belongs to the LpxB family.

The enzyme catalyses 2-N,3-O-bis[(3R)-3-hydroxytetradecanoyl]-alpha-D-glucosaminyl 1-phosphate + UDP-2-N,3-O-bis[(3R)-3-hydroxytetradecanoyl]-alpha-D-glucosamine = lipid A disaccharide (E. coli) + UDP + H(+). It catalyses the reaction a lipid X + a UDP-2-N,3-O-bis[(3R)-3-hydroxyacyl]-alpha-D-glucosamine = a lipid A disaccharide + UDP + H(+). The protein operates within glycolipid biosynthesis; lipid IV(A) biosynthesis; lipid IV(A) from (3R)-3-hydroxytetradecanoyl-[acyl-carrier-protein] and UDP-N-acetyl-alpha-D-glucosamine: step 5/6. Its function is as follows. Condensation of UDP-2,3-diacylglucosamine and 2,3-diacylglucosamine-1-phosphate to form lipid A disaccharide, a precursor of lipid A, a phosphorylated glycolipid that anchors the lipopolysaccharide to the outer membrane of the cell. The chain is Lipid-A-disaccharide synthase from Salmonella paratyphi B (strain ATCC BAA-1250 / SPB7).